The primary structure comprises 180 residues: MNTRLEKFYKENVVPALMKEFGYTNPMEVPKLVKVTLNMGVGEAATNKKILENAVADMSKISGQKPVVTKSRVSVASFKIRDGWPIGCKTTLRRAKMYEFLDRLINISLPRVRDFRGVSGRSFDGRGNFNMGVKEQIIFPEIDFDAVDAIRGMDIAITTTAKTDAEAKALLAAFKFPFRN.

Belongs to the universal ribosomal protein uL5 family. Part of the 50S ribosomal subunit; part of the 5S rRNA/L5/L18/L25 subcomplex. Contacts the 5S rRNA and the P site tRNA. Forms a bridge to the 30S subunit in the 70S ribosome.

Functionally, this is one of the proteins that bind and probably mediate the attachment of the 5S RNA into the large ribosomal subunit, where it forms part of the central protuberance. In the 70S ribosome it contacts protein S13 of the 30S subunit (bridge B1b), connecting the 2 subunits; this bridge is implicated in subunit movement. Contacts the P site tRNA; the 5S rRNA and some of its associated proteins might help stabilize positioning of ribosome-bound tRNAs. This chain is Large ribosomal subunit protein uL5, found in Xanthomonas campestris pv. campestris (strain 8004).